Here is a 63-residue protein sequence, read N- to C-terminus: Insect toxin TbIT-1 (63 aa).

The LCN-type CS-alpha/beta domain occupies Lys-2 to Asx-63. 4 disulfides stabilise this stretch: Cys-12–Cys-62, Cys-16–Cys-38, Cys-24–Cys-43, and Cys-28–Cys-45.

Belongs to the long (4 C-C) scorpion toxin superfamily. Sodium channel inhibitor family. Beta subfamily. In terms of tissue distribution, expressed by the venom gland.

It localises to the secreted. Beta toxins bind voltage-independently at site-4 of sodium channels (Nav) and shift the voltage of activation toward more negative potentials thereby affecting sodium channel activation and promoting spontaneous and repetitive firing. This toxin is only active against insects. The protein is Insect toxin TbIT-1 of Tityus bahiensis (Brazilian scorpion).